We begin with the raw amino-acid sequence, 95 residues long: MSHYDIIHKPVISEKAYAGMERGVYSFWVSPNATKTDIKSAIQKAFDVTVVGISTMNVRGKRKRVGRFIGQRADRKKAIVRLAEGQTIAALEGQA.

Belongs to the universal ribosomal protein uL23 family. In terms of assembly, part of the 50S ribosomal subunit. Contacts protein L29, and trigger factor when it is bound to the ribosome.

Its function is as follows. One of the early assembly proteins it binds 23S rRNA. One of the proteins that surrounds the polypeptide exit tunnel on the outside of the ribosome. Forms the main docking site for trigger factor binding to the ribosome. The polypeptide is Large ribosomal subunit protein uL23 (Deinococcus deserti (strain DSM 17065 / CIP 109153 / LMG 22923 / VCD115)).